We begin with the raw amino-acid sequence, 538 residues long: Syncytin-2 (538 aa).

An N-terminal signal peptide occupies residues methionine 1–alanine 15. Over alanine 16–lysine 478 the chain is Extracellular. The CXXC signature appears at cysteine 43 to cysteine 46. 3 cysteine pairs are disulfide-bonded: cysteine 43/cysteine 46, cysteine 43/cysteine 439, and cysteine 431/cysteine 438. N-linked (GlcNAc...) asparagine glycans are attached at residues asparagine 133, asparagine 146, asparagine 177, asparagine 220, asparagine 241, asparagine 247, asparagine 312, and asparagine 332. Residues phenylalanine 354–isoleucine 374 are fusion peptide. The CKS-17 signature appears at leucine 414–isoleucine 430. Positions cysteine 431 to cysteine 439 match the CX6CC motif. Asparagine 443 carries N-linked (GlcNAc...) asparagine glycosylation. Residues tryptophan 479–phenylalanine 499 traverse the membrane as a helical segment. The Cytoplasmic segment spans residues glycine 500–phenylalanine 538.

Belongs to the gamma type-C retroviral envelope protein family. HERV class-I FRD env subfamily. The surface and transmembrane proteins form a heterodimer. They are attached by non-covalent interactions or by a labile interchain disulfide bond. Interacts with MFSD2A. Specific enzymatic cleavages in vivo yield the mature SU and TM proteins. In terms of processing, the CXXC motif is highly conserved across a broad range of retroviral envelope proteins. It is thought to participate in the formation of a labile disulfide bond possibly with the CX6CC motif present in the transmembrane protein. Isomerization of the intersubunit disulfide bond to an SU intrachain disulfide bond is thought to occur upon receptor recognition in order to allow membrane fusion. As to expression, expressed at higher level in placenta. Expressed at lower level in adrenal, bone marrow, brain, breast, colon, kidney, lung, ovary, peripheral blood lymphocytes, prostate, skin, spleen, testis, thymus, thyroid, trachea.

Its subcellular location is the virion. It is found in the cell membrane. In terms of biological role, this endogenous retroviral envelope protein has retained its original fusogenic properties and participates in trophoblast fusion and the formation of a syncytium during placenta morphogenesis. The interaction with MFSD2A is apparently important for this process. Functionally, endogenous envelope proteins may have kept, lost or modified their original function during evolution but this one can still make pseudotypes with MLV, HIV-1 or SIV-1 virions and confer infectivity. Retroviral envelope proteins mediate receptor recognition and membrane fusion during early infection. The surface protein mediates receptor recognition, while the transmembrane protein anchors the envelope heterodimer to the viral membrane through one transmembrane domain. The other hydrophobic domain, called fusion peptide, mediates fusion of the viral membrane with the target cell membrane. The polypeptide is Syncytin-2 (ERVFRD-1) (Homo sapiens (Human)).